The primary structure comprises 81 residues: Photosystem I iron-sulfur center (81 aa).

4Fe-4S ferredoxin-type domains are found at residues 2–31 (SHSVKIYDTCIGCTQCVRACPTDVLEMIPW) and 39–68 (IAPAPRTEDCVGCKRCESACPTDFLSVRVY). Positions 11, 14, 17, 21, 48, 51, 54, and 58 each coordinate [4Fe-4S] cluster.

In terms of assembly, the eukaryotic PSI reaction center is composed of at least 11 subunits. Requires [4Fe-4S] cluster as cofactor.

Its subcellular location is the plastid. The protein resides in the chloroplast thylakoid membrane. It carries out the reaction reduced [plastocyanin] + hnu + oxidized [2Fe-2S]-[ferredoxin] = oxidized [plastocyanin] + reduced [2Fe-2S]-[ferredoxin]. Its function is as follows. Apoprotein for the two 4Fe-4S centers FA and FB of photosystem I (PSI); essential for photochemical activity. FB is the terminal electron acceptor of PSI, donating electrons to ferredoxin. The C-terminus interacts with PsaA/B/D and helps assemble the protein into the PSI complex. Required for binding of PsaD and PsaE to PSI. PSI is a plastocyanin-ferredoxin oxidoreductase, converting photonic excitation into a charge separation, which transfers an electron from the donor P700 chlorophyll pair to the spectroscopically characterized acceptors A0, A1, FX, FA and FB in turn. The sequence is that of Photosystem I iron-sulfur center from Liriodendron tulipifera (Tuliptree).